Consider the following 817-residue polypeptide: DNA replication licensing factor Mcm6 (817 aa).

Residues 152–179 (CLDCQTEIRNVEQQFKFTNPTICRNPVC) form a C4-type zinc finger. An MCM domain is found at 338 to 544 (LYQNLISSLF…VVDYAIARKI (207 aa)). Ser-391, Thr-392, Ala-393, Lys-394, Ser-395, and Asn-496 together coordinate ATP. Positions 520-523 (SRFD) match the Arginine finger motif. Arg-611 and Glu-614 together coordinate ADP.

The protein belongs to the MCM family. As to quaternary structure, component of the Mcm2-7 complex. The complex forms a toroidal hexameric ring with the proposed subunit order Mcm2-Mcm6-Mcm4-Mcm7-Mcm3-Mcm5. The heterodimers of Mcm4/Mcm6 and Mcm3/Mcm5 interact with Mcm2 and Mcm7. In stage 12 embryos, strongly expressed in the CNS and weakly in the gut.

It is found in the nucleus. It catalyses the reaction ATP + H2O = ADP + phosphate + H(+). Its function is as follows. Acts as a component of the Mcm2-7 complex (Mcm complex) which is the putative replicative helicase essential for 'once per cell cycle' DNA replication initiation and elongation in eukaryotic cells. Core component of CDC45-MCM-GINS (CMG) helicase, the molecular machine that unwinds template DNA during replication, and around which the replisome is built. The active ATPase sites in the Mcm2-7 ring are formed through the interaction surfaces of two neighboring subunits such that a critical structure of a conserved arginine finger motif is provided in trans relative to the ATP-binding site of the Walker A box of the adjacent subunit. The six ATPase active sites, however, are likely to contribute differentially to the complex helicase activity Required for DNA replication and cell proliferation. Required for mitotic cycles, endocycles, and the special S phase associated with the amplification of chorion genes; has a role in origin unwinding or fork elongation at chorion loci. The sequence is that of DNA replication licensing factor Mcm6 from Drosophila melanogaster (Fruit fly).